Reading from the N-terminus, the 630-residue chain is WD repeat-containing protein 26 homolog (630 aa).

The segment covering 1 to 13 has biased composition (low complexity); it reads MQSTSSTSSGSCS. Positions 1-90 are disordered; that stretch reads MQSTSSTSSG…NNRENTSCSG (90 aa). A phosphoserine mark is found at S36 and S40. Polar residues-rich tracts occupy residues 48–57 and 66–75; these read PSGSSAATNG and IVNNNGSSSR. The LisH domain occupies 96-128; that stretch reads SNQEIIRLIGQYLHDVGLDKSVQTLMLESGCYL. The 62-residue stretch at 129–190 folds into the CTLH domain; the sequence is EHPSATKFRE…EHLDDGNPLD (62 aa). 7 WD repeats span residues 312–351, 359–400, 404–443, 445–482, 485–524, 529–569, and 572–612; these read DHCD…LTLK, QAQL…LVVK, SLED…VDSW, GVRV…SDFD, REPH…LVRR, RQSN…PLAK, and GHTK…SSAT. The interval 604 to 630 is disordered; the sequence is PKPNGSSATTESDDCSSSSSSSSWNMT. Low complexity predominate over residues 609–630; the sequence is SSATTESDDCSSSSSSSSWNMT.

The protein localises to the cytoplasm. Its subcellular location is the mitochondrion. G-beta-like protein involved in cell signal transduction. This Drosophila melanogaster (Fruit fly) protein is WD repeat-containing protein 26 homolog.